The sequence spans 338 residues: Ketol-acid reductoisomerase (NADP(+)) (338 aa).

The KARI N-terminal Rossmann domain maps to 1–181 (MKVYYDKDCD…GGGRTGIIET (181 aa)). NADP(+) contacts are provided by residues 24 to 27 (YGSQ), R47, S50, T52, and 82 to 85 (DEFQ). H107 is an active-site residue. G133 contacts NADP(+). The KARI C-terminal knotted domain occupies 182–327 (TFKDETETDL…EQLRSMMPWI (146 aa)). Mg(2+) contacts are provided by D190, E194, E226, and E230. S251 contributes to the substrate binding site.

Belongs to the ketol-acid reductoisomerase family. Requires Mg(2+) as cofactor.

It catalyses the reaction (2R)-2,3-dihydroxy-3-methylbutanoate + NADP(+) = (2S)-2-acetolactate + NADPH + H(+). The catalysed reaction is (2R,3R)-2,3-dihydroxy-3-methylpentanoate + NADP(+) = (S)-2-ethyl-2-hydroxy-3-oxobutanoate + NADPH + H(+). It functions in the pathway amino-acid biosynthesis; L-isoleucine biosynthesis; L-isoleucine from 2-oxobutanoate: step 2/4. The protein operates within amino-acid biosynthesis; L-valine biosynthesis; L-valine from pyruvate: step 2/4. In terms of biological role, involved in the biosynthesis of branched-chain amino acids (BCAA). Catalyzes an alkyl-migration followed by a ketol-acid reduction of (S)-2-acetolactate (S2AL) to yield (R)-2,3-dihydroxy-isovalerate. In the isomerase reaction, S2AL is rearranged via a Mg-dependent methyl migration to produce 3-hydroxy-3-methyl-2-ketobutyrate (HMKB). In the reductase reaction, this 2-ketoacid undergoes a metal-dependent reduction by NADPH to yield (R)-2,3-dihydroxy-isovalerate. The protein is Ketol-acid reductoisomerase (NADP(+)) of Pseudomonas fluorescens (strain SBW25).